The primary structure comprises 557 residues: Potassium-transporting ATPase potassium-binding subunit (557 aa).

The next 12 helical transmembrane spans lie at Gly5–Ser25, Leu63–Gly83, Gly132–Ile152, Leu170–Ile190, Phe253–Val273, Leu283–Val303, Val329–Ala349, Ala356–Val376, Gly379–Gly399, Leu416–Met436, Leu484–Ala504, and Leu526–Ala546.

Belongs to the KdpA family. The system is composed of three essential subunits: KdpA, KdpB and KdpC.

Its subcellular location is the cell inner membrane. Its function is as follows. Part of the high-affinity ATP-driven potassium transport (or Kdp) system, which catalyzes the hydrolysis of ATP coupled with the electrogenic transport of potassium into the cytoplasm. This subunit binds the periplasmic potassium ions and delivers the ions to the membrane domain of KdpB through an intramembrane tunnel. The polypeptide is Potassium-transporting ATPase potassium-binding subunit (Escherichia coli (strain K12 / MC4100 / BW2952)).